The primary structure comprises 204 residues: Bcl-2-like protein 10 (204 aa).

The BH1 motif lies at 86–105 (LSDSPGPTWGRVVTLVTFAG). The segment at 118 to 133 (WKKWGFQPRLKEQEGD) is required for Ca(2+) binding. Glycyl lysine isopeptide (Lys-Gly) (interchain with G-Cter in ubiquitin) cross-links involve residues lysine 119, lysine 120, and lysine 128. The short motif at 156–167 (WLQAQGGWDGFC) is the BH2 element. Residues 183–200 (LVQAFLSCLLTTAFIYLW) traverse the membrane as a helical segment.

Belongs to the Bcl-2 family. In terms of assembly, interacts with BAX. Interacts with BCL2 and BCL2L1/BCLX. Interacts with APAF1. Interacts with ITPR1, ITPR2 and ITPR3; the interaction with ITPR1 is increased in the presence of AHCLY1. Interacts with AHCYL1. Interacts with HIP1R (via ENTH and I/LWEQ domains). Interacts with CASP9. Interacts with BCL2L11/BIM. Interacts with BIK. Interacts with UBQLN4. Interacts with NME2/NM23-H2. Interacts with PMAIP1/NOXA. Interacts with TPX2. Interacts with UBQLN1; in the cytoplasm. Interacts (via BH1 domain) with BECN1. It depends on Ca(2+) as a cofactor. Monoubiquitinated by UBQLN1; results in stabilization of BCL2L10 protein abundance and in relocalization from mitochondria to cytoplasm. As to expression, widely expressed in adult tissues. Preferentially expressed in lung, liver and kidney.

The protein resides in the mitochondrion. It localises to the nucleus membrane. Its subcellular location is the endoplasmic reticulum. The protein localises to the cytoplasm. It is found in the cytoskeleton. The protein resides in the spindle. In terms of biological role, promotes cell survival by suppressing apoptosis induced by BAX but not BAK. Increases binding of AHCYL1/IRBIT to ITPR1. Reduces ITPR1-mediated calcium release from the endoplasmic reticulum cooperatively with AHCYL1/IRBIT under normal cellular conditions. Under apoptotic stress conditions, dissociates from ITPR1 and is displaced from mitochondria-associated endoplasmic reticulum membranes, leading to increased Ca(2+) transfer to mitochondria which promotes apoptosis. Required for the correct formation of the microtubule organizing center during oocyte cell division, potentially via regulation of protein abundance and localization of other microtubule organizing center components such as AURKA and TPX2. This Homo sapiens (Human) protein is Bcl-2-like protein 10.